Consider the following 180-residue polypeptide: NAD(P)H-quinone oxidoreductase subunit I, chloroplastic (180 aa).

2 4Fe-4S ferredoxin-type domains span residues 55 to 84 (GRIH…VDWR) and 95 to 124 (LNYS…MTEE). The [4Fe-4S] cluster site is built by Cys64, Cys67, Cys70, Cys74, Cys104, Cys107, Cys110, and Cys114.

Belongs to the complex I 23 kDa subunit family. In terms of assembly, NDH is composed of at least 16 different subunits, 5 of which are encoded in the nucleus. Requires [4Fe-4S] cluster as cofactor.

Its subcellular location is the plastid. It is found in the chloroplast thylakoid membrane. The catalysed reaction is a plastoquinone + NADH + (n+1) H(+)(in) = a plastoquinol + NAD(+) + n H(+)(out). The enzyme catalyses a plastoquinone + NADPH + (n+1) H(+)(in) = a plastoquinol + NADP(+) + n H(+)(out). In terms of biological role, NDH shuttles electrons from NAD(P)H:plastoquinone, via FMN and iron-sulfur (Fe-S) centers, to quinones in the photosynthetic chain and possibly in a chloroplast respiratory chain. The immediate electron acceptor for the enzyme in this species is believed to be plastoquinone. Couples the redox reaction to proton translocation, and thus conserves the redox energy in a proton gradient. The polypeptide is NAD(P)H-quinone oxidoreductase subunit I, chloroplastic (Zea mays (Maize)).